Consider the following 249-residue polypeptide: Coproheme decarboxylase (249 aa).

Fe-coproporphyrin III is bound by residues Arg-131, 145–149 (YPMDK), His-172, Gln-185, and Ser-223. The active site involves Tyr-145.

This sequence belongs to the ChdC family. Type 1 subfamily. Fe-coproporphyrin III serves as cofactor.

It catalyses the reaction Fe-coproporphyrin III + 2 H2O2 + 2 H(+) = heme b + 2 CO2 + 4 H2O. The enzyme catalyses Fe-coproporphyrin III + H2O2 + H(+) = harderoheme III + CO2 + 2 H2O. The catalysed reaction is harderoheme III + H2O2 + H(+) = heme b + CO2 + 2 H2O. The protein operates within porphyrin-containing compound metabolism; protoheme biosynthesis. Functionally, involved in coproporphyrin-dependent heme b biosynthesis. Catalyzes the decarboxylation of Fe-coproporphyrin III (coproheme) to heme b (protoheme IX), the last step of the pathway. The reaction occurs in a stepwise manner with a three-propionate intermediate. In Halalkalibacterium halodurans (strain ATCC BAA-125 / DSM 18197 / FERM 7344 / JCM 9153 / C-125) (Bacillus halodurans), this protein is Coproheme decarboxylase.